The sequence spans 328 residues: Lateral signaling target 1 protein (328 aa).

3 disordered regions span residues 56 to 78, 108 to 135, and 177 to 200; these read SSQD…GLRS, PTHY…SASS, and PVQP…RLNG. Positions 178-200 are enriched in polar residues; that stretch reads VQPSTSTSRNNVSQISGSSRLNG.

In terms of assembly, interacts with fbf-2; the interaction probably mediates the release of the C-terminal tail of fbf-2 from the RNA-binding domain, thereby altering its RNA-binding affinity.

Its function is as follows. Plays a role in germline stem cell maintenance, perhaps acting in concert with mRNA-binding factor fbf-2. May regulate fbf-2 by modulating RNA-binding and perhaps by competition with the intramolecular interaction between the fbf-2 RNA-binding domain and C-terminal tail. The protein is Lateral signaling target 1 protein of Caenorhabditis elegans.